The primary structure comprises 102 residues: Small ribosomal subunit protein uS10 (102 aa).

Belongs to the universal ribosomal protein uS10 family. Part of the 30S ribosomal subunit.

Functionally, involved in the binding of tRNA to the ribosomes. In Streptococcus pyogenes serotype M12 (strain MGAS2096), this protein is Small ribosomal subunit protein uS10.